The sequence spans 194 residues: UPF0301 protein CBU_2093 (194 aa).

Belongs to the UPF0301 (AlgH) family.

The polypeptide is UPF0301 protein CBU_2093 (Coxiella burnetii (strain RSA 493 / Nine Mile phase I)).